We begin with the raw amino-acid sequence, 250 residues long: Ubiquinone/menaquinone biosynthesis C-methyltransferase UbiE (250 aa).

S-adenosyl-L-methionine contacts are provided by residues Thr73, Asp94, 122-123, and Ser139; that span reads NA.

The protein belongs to the class I-like SAM-binding methyltransferase superfamily. MenG/UbiE family.

It carries out the reaction a 2-demethylmenaquinol + S-adenosyl-L-methionine = a menaquinol + S-adenosyl-L-homocysteine + H(+). The catalysed reaction is a 2-methoxy-6-(all-trans-polyprenyl)benzene-1,4-diol + S-adenosyl-L-methionine = a 5-methoxy-2-methyl-3-(all-trans-polyprenyl)benzene-1,4-diol + S-adenosyl-L-homocysteine + H(+). It participates in quinol/quinone metabolism; menaquinone biosynthesis; menaquinol from 1,4-dihydroxy-2-naphthoate: step 2/2. Its pathway is cofactor biosynthesis; ubiquinone biosynthesis. Functionally, methyltransferase required for the conversion of demethylmenaquinol (DMKH2) to menaquinol (MKH2) and the conversion of 2-polyprenyl-6-methoxy-1,4-benzoquinol (DDMQH2) to 2-polyprenyl-3-methyl-6-methoxy-1,4-benzoquinol (DMQH2). This is Ubiquinone/menaquinone biosynthesis C-methyltransferase UbiE from Francisella tularensis subsp. holarctica (strain FTNF002-00 / FTA).